Reading from the N-terminus, the 2381-residue chain is Highly reducing polyketide synthase virA (2381 aa).

Residues Met-1 to Ser-420 form the Ketosynthase family 3 (KS3) domain. Active-site for beta-ketoacyl synthase activity residues include Cys-171, His-306, and His-344. The segment at Val-535 to Glu-851 is malonyl-CoA:ACP transacylase (MAT) domain. Ser-629 functions as the For malonyltransferase activity in the catalytic mechanism. An N-terminal hotdog fold region spans residues His-920 to Leu-1064. Residues His-920–Lys-1232 form a dehydratase (DH) domain region. The PKS/mFAS DH domain occupies His-920–Val-1235. Residue His-952 is the Proton acceptor; for dehydratase activity of the active site. The C-terminal hotdog fold stretch occupies residues His-1078–Val-1235. The active-site Proton donor; for dehydratase activity is Asp-1144. The enoyl reductase (ER) domain stretch occupies residues Gly-1639–Val-1956. The segment at Thr-1981–Ser-2159 is ketoreductase (KR) domain. The 79-residue stretch at Thr-2297–Leu-2375 folds into the Carrier domain. Ser-2334 bears the O-(pantetheine 4'-phosphoryl)serine mark.

It functions in the pathway secondary metabolite biosynthesis. In terms of biological role, highly reducing polyketide synthase; part of the gene cluster that mediates the biosynthesis of virensols and trichoxide, fungal natural products that contain or are derived from a salicylaldehyde core. The pathway begins with the synthesis of the reduced chain in virensol C by the highly reducing polyketide synthase virA via condensation of one acetate and 8 malonate units. VirA has interesting programming rules since the first 2 ketides are fully reduced, the 3 following ketides undergo beta-dehydration, and the last 3 ketides are only reduced to beta-hydroxys to yield the trihydroxy portion. The production of aldehyde virensol C by virA alone is surprising, since virA does not contain a reductase (R) domain that is typically associated with reductive product release in HRPKS. The cupin-domain enzyme virC is involved in enhancing virA product turnover. The short-chain dehydrogenase virB then oxidizes the C-7 alcohol of virensol C to a ketone, yielding virensol D. Virensol D is further transformed to salicylaldehyde 5-deoxyaurocitrin by the short-chain dehydrogenase virD. VirD catalyzes the dehydrogenation of C-3 to form the beta-ketone aldehyde, which is followed by the generation of the nucleophilic C-2 that is required for the intramolecular aldol condensation between C-2 and C-7, itself followed by dehydration and aromatization which leads to salicylaldehyde 5-deoxyaurocitrin. While the dehydrogenation of virensol D is definitely catalyzed by virD, the aldol condensation and dehydration may be uncatalyzed or assisted by virD. The short chain dehydrogenase virG then converts salicylaldehyde 5-deoxyaurocitrin into virensol B which is further hydroxylated by the cytochrome P450 monooxygenase virE to yield the hydroquinone virensol A. VirI then may oxidize virensol A to form the quinone, while virH performs the epoxidation. Finally, the two remaining short-chain dehydrogenases, virK and virL, are probably responsible for reducing the ketones to the corresponding alcohols to furnish the epoxycyclohexanol structure in trichoxide. The chain is Highly reducing polyketide synthase virA from Hypocrea virens (strain Gv29-8 / FGSC 10586) (Gliocladium virens).